Consider the following 208-residue polypeptide: NAD(P)H-quinone oxidoreductase subunit I (208 aa).

4Fe-4S ferredoxin-type domains lie at 55–84 (GRIH…VDWV) and 95–124 (RNYS…MTEE). Cys64, Cys67, Cys70, Cys74, Cys104, Cys107, Cys110, and Cys114 together coordinate [4Fe-4S] cluster.

This sequence belongs to the complex I 23 kDa subunit family. In terms of assembly, NDH-1 is composed of at least 11 different subunits. It depends on [4Fe-4S] cluster as a cofactor.

Its subcellular location is the cellular thylakoid membrane. The catalysed reaction is a plastoquinone + NADH + (n+1) H(+)(in) = a plastoquinol + NAD(+) + n H(+)(out). The enzyme catalyses a plastoquinone + NADPH + (n+1) H(+)(in) = a plastoquinol + NADP(+) + n H(+)(out). Functionally, NDH-1 shuttles electrons from an unknown electron donor, via FMN and iron-sulfur (Fe-S) centers, to quinones in the respiratory and/or the photosynthetic chain. The immediate electron acceptor for the enzyme in this species is believed to be plastoquinone. Couples the redox reaction to proton translocation, and thus conserves the redox energy in a proton gradient. This chain is NAD(P)H-quinone oxidoreductase subunit I, found in Prochlorococcus marinus (strain MIT 9215).